The chain runs to 94 residues: Large ribosomal subunit protein bL27 (94 aa).

The propeptide occupies M1 to F9.

It belongs to the bacterial ribosomal protein bL27 family. In terms of processing, the N-terminus is cleaved by ribosomal processing cysteine protease Prp.

In Staphylococcus epidermidis (strain ATCC 35984 / DSM 28319 / BCRC 17069 / CCUG 31568 / BM 3577 / RP62A), this protein is Large ribosomal subunit protein bL27.